The following is a 541-amino-acid chain: MAAASFQPLKCLLLWVFFVITPPVKAVPEPGIWTVPIGSGAGSLFFRKTLYNSTNIKVKLISPNCPTPVKLTVKWYLRSHRCYNQFTNLEEVLERHHTNLDTTDNFCKNVSKPDFCDKNEDKNIDCNKDMHALPTLKMSKLVPKISVNQSAGSKNPLNQMDFDIVARTYQDGPYLFVLQVKGDENVKWNLSVTVSMKGPHGFISASDWPLMIFYMVMCIMYILLALLWFIWSACYWKDLLRIQFWIAAVIFLGMLEKAVYYAEYQNTDNTGVSSHGLLIFAELISSIKRTLARLLVTIVSLGYGIIKPRLGAVMHRVVGMGVLYFVFAAVEGVMRIIGAKEYDLVLLAGIPLALLDSGLCWWIFVSLAQTMKTLKLRKNTVKYSLYRHFTNTLIFAILASIIFMIWRTKKFQLVDCQADWMELWVDDAYWRFLFFIILLVIMFLWRPSANNQRYAFTPLIDDSDDEVEEFLVTDHLAEGMKLRGTKPECNGAPKPPATNIDEDLKWVEENIPSSFADAALPVLMDSDEEIMMTKYEMSKIE.

The first 26 residues, 1–26 (MAAASFQPLKCLLLWVFFVITPPVKA), serve as a signal peptide directing secretion. Topologically, residues 27-209 (VPEPGIWTVP…HGFISASDWP (183 aa)) are lumenal. Asn52, Asn109, Asn148, and Asn189 each carry an N-linked (GlcNAc...) asparagine glycan. 2 disulfide bridges follow: Cys65-Cys116 and Cys82-Cys416. Residues 210–230 (LMIFYMVMCIMYILLALLWFI) form a helical membrane-spanning segment. The Cytoplasmic portion of the chain corresponds to 231–241 (WSACYWKDLLR). The helical transmembrane segment at 242 to 262 (IQFWIAAVIFLGMLEKAVYYA) threads the bilayer. Residues 263–293 (EYQNTDNTGVSSHGLLIFAELISSIKRTLAR) lie on the Lumenal side of the membrane. A helical membrane pass occupies residues 294–314 (LLVTIVSLGYGIIKPRLGAVM). Residues 315 to 316 (HR) lie on the Cytoplasmic side of the membrane. Residues 317 to 337 (VVGMGVLYFVFAAVEGVMRII) form a helical membrane-spanning segment. The Lumenal segment spans residues 338–344 (GAKEYDL). The chain crosses the membrane as a helical span at residues 345–365 (VLLAGIPLALLDSGLCWWIFV). Residues 366 to 384 (SLAQTMKTLKLRKNTVKYS) lie on the Cytoplasmic side of the membrane. The helical transmembrane segment at 385 to 405 (LYRHFTNTLIFAILASIIFMI) threads the bilayer. Residues 406–422 (WRTKKFQLVDCQADWME) are Lumenal-facing. The chain crosses the membrane as a helical span at residues 423 to 443 (LWVDDAYWRFLFFIILLVIMF). Residues 444–541 (LWRPSANNQR…MTKYEMSKIE (98 aa)) lie on the Cytoplasmic side of the membrane.

It belongs to the LU7TM family. TMEM87 subfamily.

It is found in the cell membrane. The protein localises to the golgi apparatus membrane. Functionally, potential monoatomic ion channel gated by mechanical force, implicated in normal touch sensitivity through the generation of mechanically activated currents. However, a direct channel activity is debated and an alternative could be that it functions as a chaperone for an unidentified mechanosensitive ion channel. Could also be involved in cell mechanosensitivity regulating cell adhesion and migration. May also be involved in retrograde transport from endosomes to the trans-Golgi network (TGN). The polypeptide is Transmembrane protein 87A (Xenopus tropicalis (Western clawed frog)).